The primary structure comprises 407 residues: Peptidase T (407 aa).

Zn(2+) is bound at residue His81. Asp83 is a catalytic residue. Residue Asp142 coordinates Zn(2+). Glu176 (proton acceptor) is an active-site residue. 3 residues coordinate Zn(2+): Glu177, Asp199, and His381.

Belongs to the peptidase M20B family. Zn(2+) is required as a cofactor.

It localises to the cytoplasm. It catalyses the reaction Release of the N-terminal residue from a tripeptide.. Its function is as follows. Cleaves the N-terminal amino acid of tripeptides. The protein is Peptidase T of Streptococcus sanguinis (strain SK36).